We begin with the raw amino-acid sequence, 260 residues long: UPF0246 protein APL_0602 (260 aa).

It belongs to the UPF0246 family.

In Actinobacillus pleuropneumoniae serotype 5b (strain L20), this protein is UPF0246 protein APL_0602.